The primary structure comprises 328 residues: uncharacterized protein (328 aa).

An SIS domain is found at 37–179; the sequence is LTEKLLCHQG…AMTLLRCRKI (143 aa). Position 52 to 57 (52 to 57) interacts with ATP; it reads GIGKSG. CBS domains follow at residues 207-264 and 273-328; these read PRTE…GGDI and MTRN…AGLL.

It belongs to the SIS family. GutQ/KpsF subfamily.

This is an uncharacterized protein from Chlamydia trachomatis serovar D (strain ATCC VR-885 / DSM 19411 / UW-3/Cx).